A 137-amino-acid polypeptide reads, in one-letter code: Large ribosomal subunit protein uL16 (137 aa).

Residues 1-19 (MLSPKKVKFRKQQRGRRTG) show a composition bias toward basic residues. The disordered stretch occupies residues 1-20 (MLSPKKVKFRKQQRGRRTGT).

It belongs to the universal ribosomal protein uL16 family. Part of the 50S ribosomal subunit.

Functionally, binds 23S rRNA and is also seen to make contacts with the A and possibly P site tRNAs. In Desulfosudis oleivorans (strain DSM 6200 / JCM 39069 / Hxd3) (Desulfococcus oleovorans), this protein is Large ribosomal subunit protein uL16.